Here is a 51-residue protein sequence, read N- to C-terminus: Large ribosomal subunit protein eL39 (51 aa).

It belongs to the eukaryotic ribosomal protein eL39 family.

This chain is Large ribosomal subunit protein eL39, found in Pyrobaculum islandicum (strain DSM 4184 / JCM 9189 / GEO3).